Here is a 617-residue protein sequence, read N- to C-terminus: DNA mismatch repair protein MutL (617 aa).

Belongs to the DNA mismatch repair MutL/HexB family.

In terms of biological role, this protein is involved in the repair of mismatches in DNA. It is required for dam-dependent methyl-directed DNA mismatch repair. May act as a 'molecular matchmaker', a protein that promotes the formation of a stable complex between two or more DNA-binding proteins in an ATP-dependent manner without itself being part of a final effector complex. The protein is DNA mismatch repair protein MutL of Christiangramia forsetii (strain DSM 17595 / CGMCC 1.15422 / KT0803) (Gramella forsetii).